Consider the following 333-residue polypeptide: B3 domain-containing protein At1g32030 (333 aa).

Polar residues-rich tracts occupy residues 76–99 (VTVR…SLLD) and 134–143 (PQNASSSSTL). Residues 76–179 (VTVRNPEQNQ…SEPKKAKTPY (104 aa)) are disordered. A DNA-binding region (TF-B3) is located at residues 220 to 328 (QSRLLMPFNT…ILSFALVLPP (109 aa)).

The protein resides in the nucleus. The chain is B3 domain-containing protein At1g32030 from Arabidopsis thaliana (Mouse-ear cress).